Consider the following 122-residue polypeptide: Large ribosomal subunit protein uL14c (122 aa).

This sequence belongs to the universal ribosomal protein uL14 family. As to quaternary structure, part of the 50S ribosomal subunit.

Its subcellular location is the plastid. It is found in the chloroplast. Binds to 23S rRNA. This Tupiella akineta (Green alga) protein is Large ribosomal subunit protein uL14c.